The chain runs to 325 residues: MTAPGSASHDAAHDPAHALDLDRLLASAADDGGGQVDDSIPQLAETDPSLAGIALVTPDGRTHAAGDSAHAFSIQSAVKPFLFALALADTDGAALDAVGIEPTGEAFDAIKLESGTGRPPNPMVNAGAILTASLVRGSTLEERTARILAGLSAFAGRDLEVDEDVAECEQLLGDRNHALAHLMRSEGTLHVSADDAVAAYARACAVLVTPEILAAMGATLACGGRNPLTGSRVVSREVARDSVSVMATCGVYDGSGRWMRRVGVPAKSSVSGAIVLASPGRLGAAVFSPPLDDQGTSVRGAVLAQRLADELGLHAFGGTGGRERA.

Positions 76, 125, 169, 176, 200, 252, and 270 each coordinate substrate.

This sequence belongs to the glutaminase family. As to quaternary structure, homotetramer.

The catalysed reaction is L-glutamine + H2O = L-glutamate + NH4(+). This chain is Glutaminase, found in Clavibacter michiganensis subsp. michiganensis (strain NCPPB 382).